The following is a 440-amino-acid chain: Transposon Ty1-LR2 Gag polyprotein (440 aa).

Polar residues-rich tracts occupy residues 1–23 (MESQ…SVTS), 48–60 (TKAN…TPAS), and 127–152 (QSQF…GNTF). Disordered stretches follow at residues 1-93 (MESQ…MMTQ), 126-174 (PQSQ…PPPM), and 352-440 (GSRN…PGTY). Over residues 153–165 (TDSSSADSDMTST) the composition is skewed to low complexity. Positions 299-401 (NNGIHINNKV…NSKSKTARAH (103 aa)) are RNA-binding. Low complexity predominate over residues 402-418 (NVSTSNNSPSTDNDSIS). S416 is modified (phosphoserine). Over residues 419 to 428 (KSTTEPIQLN) the composition is skewed to polar residues. A compositionally biased stretch (basic and acidic residues) spans 429–440 (NKHDLHLRPGTY).

As to quaternary structure, homotrimer.

Its subcellular location is the cytoplasm. Its function is as follows. Capsid protein (CA) is the structural component of the virus-like particle (VLP), forming the shell that encapsulates the retrotransposons dimeric RNA genome. The particles are assembled from trimer-clustered units and there are holes in the capsid shells that allow for the diffusion of macromolecules. CA also has nucleocapsid-like chaperone activity, promoting primer tRNA(i)-Met annealing to the multipartite primer-binding site (PBS), dimerization of Ty1 RNA and initiation of reverse transcription. This Saccharomyces cerevisiae (strain ATCC 204508 / S288c) (Baker's yeast) protein is Transposon Ty1-LR2 Gag polyprotein (TY1A-LR2).